A 136-amino-acid polypeptide reads, in one-letter code: Histone H3, embryonic (136 aa).

A disordered region spans residues 1 to 43 (MARTKQTARKSTGGKAPRKQLATKAARKSAPATGGVKKPHRYR). Lys-5 bears the N6-methylated lysine mark. Lys-10 carries the post-translational modification N6-acetyllysine; alternate. At Lys-10 the chain carries N6-methylated lysine; alternate. Ser-11 is subject to Phosphoserine. N6-acetyllysine occurs at positions 15 and 24. N6-methylated lysine occurs at positions 28, 37, and 80.

This sequence belongs to the histone H3 family. The nucleosome is a histone octamer containing two molecules each of H2A, H2B, H3 and H4 assembled in one H3-H4 heterotetramer and two H2A-H2B heterodimers. The octamer wraps approximately 147 bp of DNA. Acetylation is generally linked to gene activation. In terms of processing, methylation at Lys-5 is linked to gene activation. Methylation at Lys-10 is linked to gene repression.

It is found in the nucleus. The protein resides in the chromosome. Functionally, core component of nucleosome. Nucleosomes wrap and compact DNA into chromatin, limiting DNA accessibility to the cellular machineries which require DNA as a template. Histones thereby play a central role in transcription regulation, DNA repair, DNA replication and chromosomal stability. DNA accessibility is regulated via a complex set of post-translational modifications of histones, also called histone code, and nucleosome remodeling. The sequence is that of Histone H3, embryonic from Paracentrotus lividus (Common sea urchin).